We begin with the raw amino-acid sequence, 64 residues long: MSRKCEFCGKEPHVGNNVSHANNKTKRLWYPNLQTVRHMDKSGAVRRVKACTRCIRTGLVVKPA.

It belongs to the bacterial ribosomal protein bL28 family.

This chain is Large ribosomal subunit protein bL28, found in Syntrophobacter fumaroxidans (strain DSM 10017 / MPOB).